The chain runs to 96 residues: Frd operon uncharacterized protein C (96 aa).

The protein belongs to the HupF/HypC family.

The chain is Frd operon uncharacterized protein C from Proteus vulgaris.